A 456-amino-acid chain; its full sequence is Phosphomannomutase (456 aa).

Catalysis depends on Ser-98, which acts as the Phosphoserine intermediate. Residues Ser-98, Asp-245, Asp-247, and Asp-249 each contribute to the Mg(2+) site.

The protein belongs to the phosphohexose mutase family. Requires Mg(2+) as cofactor.

The enzyme catalyses alpha-D-mannose 1-phosphate = D-mannose 6-phosphate. It participates in nucleotide-sugar biosynthesis; GDP-alpha-D-mannose biosynthesis; alpha-D-mannose 1-phosphate from D-fructose 6-phosphate: step 2/2. In terms of biological role, involved in the biosynthesis of the capsular polysaccharide colanic acid. The chain is Phosphomannomutase (manB) from Salmonella typhimurium (strain LT2 / SGSC1412 / ATCC 700720).